Consider the following 197-residue polypeptide: dTTP/UTP pyrophosphatase (197 aa).

The Proton acceptor role is filled by D70.

This sequence belongs to the Maf family. YhdE subfamily. In terms of assembly, homodimer. Can also form homotetramers. A divalent metal cation serves as cofactor.

The protein resides in the cytoplasm. It catalyses the reaction dTTP + H2O = dTMP + diphosphate + H(+). The catalysed reaction is UTP + H2O = UMP + diphosphate + H(+). It carries out the reaction 5-methyl-UTP + H2O = 5-methyl-UMP + diphosphate + H(+). The enzyme catalyses psi-UTP + H2O = psi-UMP + diphosphate + H(+). It catalyses the reaction 5-methyl-CTP + H2O = 5-methyl-CMP + diphosphate + H(+). Nucleoside triphosphate pyrophosphatase that hydrolyzes dTTP and UTP. Can also hydrolyze TTP and the modified nucleotides 5-methyl-UTP (m(5)UTP), pseudo-UTP and 5-methyl-CTP (m(5)CTP). Has weak activity with CTP. May have a dual role in cell division arrest and in preventing the incorporation of modified nucleotides into cellular nucleic acids. Important in maintenance of cell shape. In Escherichia coli (strain K12), this protein is dTTP/UTP pyrophosphatase (yhdE).